A 249-amino-acid polypeptide reads, in one-letter code: Ubiquinone biosynthesis O-methyltransferase (249 aa).

S-adenosyl-L-methionine is bound by residues Arg-41, Gly-72, Asp-93, and Met-136.

Belongs to the methyltransferase superfamily. UbiG/COQ3 family.

It catalyses the reaction a 3-demethylubiquinol + S-adenosyl-L-methionine = a ubiquinol + S-adenosyl-L-homocysteine + H(+). The catalysed reaction is a 3-(all-trans-polyprenyl)benzene-1,2-diol + S-adenosyl-L-methionine = a 2-methoxy-6-(all-trans-polyprenyl)phenol + S-adenosyl-L-homocysteine + H(+). It participates in cofactor biosynthesis; ubiquinone biosynthesis. Functionally, O-methyltransferase that catalyzes the 2 O-methylation steps in the ubiquinone biosynthetic pathway. This is Ubiquinone biosynthesis O-methyltransferase from Methylobacterium sp. (strain 4-46).